A 339-amino-acid chain; its full sequence is tRNA N6-adenosine threonylcarbamoyltransferase (339 aa).

2 residues coordinate Fe cation: histidine 111 and histidine 115. Substrate-binding positions include 134-138 (LVSGG), aspartate 167, glycine 180, and asparagine 272. Aspartate 300 lines the Fe cation pocket.

The protein belongs to the KAE1 / TsaD family. Fe(2+) serves as cofactor.

Its subcellular location is the cytoplasm. It catalyses the reaction L-threonylcarbamoyladenylate + adenosine(37) in tRNA = N(6)-L-threonylcarbamoyladenosine(37) in tRNA + AMP + H(+). Its function is as follows. Required for the formation of a threonylcarbamoyl group on adenosine at position 37 (t(6)A37) in tRNAs that read codons beginning with adenine. Is involved in the transfer of the threonylcarbamoyl moiety of threonylcarbamoyl-AMP (TC-AMP) to the N6 group of A37, together with TsaE and TsaB. TsaD likely plays a direct catalytic role in this reaction. The sequence is that of tRNA N6-adenosine threonylcarbamoyltransferase from Vibrio vulnificus (strain YJ016).